The primary structure comprises 1526 residues: Cell wall protein IFF4 (1526 aa).

The first 20 residues, 1–20 (MKFLQKFIITVALLTNIVFA), serve as a signal peptide directing secretion. Residues Asn93 and Asn498 are each glycosylated (N-linked (GlcNAc...) asparagine). The interval 512 to 541 (SSAGGSSFPEETHMLQTSDSDLSSTAGSES) is disordered. Over residues 525–541 (MLQTSDSDLSSTAGSES) the composition is skewed to polar residues. Residue Asn637 is glycosylated (N-linked (GlcNAc...) asparagine). A disordered region spans residues 1180–1207 (WNGAKSDSPHTSESDITSQYNSHSTSVA). Over residues 1193–1207 (SDITSQYNSHSTSVA) the composition is skewed to polar residues. N-linked (GlcNAc...) asparagine glycans are attached at residues Asn1451, Asn1463, Asn1479, Asn1502, and Asn1506. The interval 1455–1483 (SSVSGYPTNRSDSNGYANTPTTGSNTSGD) is disordered. A lipid anchor (GPI-anchor amidated asparagine) is attached at Asn1502. A propeptide spans 1503–1526 (GSTNISNKYLKFLGTVVSILILLI) (removed in mature form).

The protein belongs to the HYR1/IFF family. The GPI-anchor is attached to the protein in the endoplasmic reticulum and serves to target the protein to the cell surface. There, the glucosamine-inositol phospholipid moiety is cleaved off and the GPI-$modified mannoprotein is covalently attached via its lipidless GPI glycan remnant to the 1,6-beta-glucan of the outer cell wall layer.

The protein resides in the secreted. The protein localises to the cell wall. It is found in the membrane. Its function is as follows. GPI-anchored cell wall protein involved in cell wall organization, hyphal growth, as well as in host-fungal interaction and virulence. Plays a role in adherence to plastic and to host epithelial cells. Promotes the tissue fungal burden during murine vaginal candidiasis. Also increases susceptibility to neutrophil-mediated killing. Furthermore, contributes to the severity of hematogenously disseminated candidiasis in normal mice, but not in neutropenic mice. This chain is Cell wall protein IFF4 (IFF4), found in Candida albicans (strain SC5314 / ATCC MYA-2876) (Yeast).